The chain runs to 77 residues: MSCCGGNCGCGSSCKCGSGCGGCKMYADLSYTESTTSETLIMGVGSEKAQYESAEMGAENDGCKCGANCTCNPCTCK.

It belongs to the metallothionein superfamily. Type 15 family. In terms of tissue distribution, expressed in the left, stem and flower, at very low levels in roots and is not detectable in mesophyll protoplasts.

Its function is as follows. Metallothioneins have a high content of cysteine residues that bind various heavy metals. This chain is Metallothionein-like protein type 2 (MTI), found in Vicia faba (Broad bean).